The sequence spans 343 residues: Insertion element IS630 uncharacterized 39 kDa protein (343 aa).

This Shigella sonnei protein is Insertion element IS630 uncharacterized 39 kDa protein.